Reading from the N-terminus, the 189-residue chain is High affinity copper uptake protein 1 (189 aa).

Over 1–67 the chain is Extracellular; sequence MDHSAHMGMS…AGLVINTAGE (67 aa). A Methionine segments (Mets) motif motif is present at residues 13–18; the sequence is MGMSDM. Residues 15–36 form a disordered region; that stretch reads MSDMNHSTTMPPSHHHPTSSGS. Residues 20–36 show a composition bias toward low complexity; the sequence is HSTTMPPSHHHPTSSGS. The chain crosses the membrane as a helical span at residues 68 to 88; that stretch reads MAGAFVAVFLLAMFYEGLKIA. Topologically, residues 89–131 are cytoplasmic; the sequence is REGLLRKSQVSIRYNSMPVPGPNGTILMETHKTVGQQMLSFPH. At Thr-113 the chain carries Phosphothreonine. The helical transmembrane segment at 132–152 threads the bilayer; it reads LLQTVLHIIQVVISYFLMLIF. Residues 153-155 lie on the Extracellular side of the membrane; it reads MTY. Residues 156–176 form a helical membrane-spanning segment; it reads NGYLCIAVAAGAGTGYFLFSW. Over 177 to 189 the chain is Cytoplasmic; the sequence is KKAVVVDITEHCH. At Cys-188 the chain carries Cysteine sulfenic acid (-SOH).

It belongs to the copper transporter (Ctr) (TC 1.A.56) family. SLC31A subfamily. Homotrimer; is stabilized by cisplatin via interactions between cisplatin and the methionine-rich clusters, and could be crucial for the copper(2+) reduction process and copper(1+) stabilization. Heterotrimer between SLC31A1, CCS and SOD1; this heterotrimer is copper(1+)-mediated and its maintenance is regulated through SOD1 activation. Interacts with KDR; this interaction is induced upon VEGFA stimulation leading to SLC31A1 and KDR subsequent co-internalization to early endosomes, thereby activating KDR downstream signaling in endothelial cells. Interacts (via C-terminal domain) with ATOX1 (via dimer form); this interaction improves ATOX1 stability and controls intracellular copper(1+) levels. Interacts with SLC31A2; this interaction stabilizes SLC31A2 and protects its from ubiquitination and degradation. Interacts (via C-terminal domain) with CCS; this interaction is copper(1+)-mediated. Proteolytic cleavage, leading to a truncated form, is facilitated by SLC31A2 and initiated preferentially by CTSL and to a minor extend by CTSB in endolysosomal compartments. A post-CTSL/cathepsin L processing occurs to yield to the fully truncated form. Post-translationally, sulfenylated at Cys-188 after stimulation with VEGFA, which induces SLC31A1-KDR disulfide bond formation and their co-internalization to early endosomes, driving to a sustained VEGFR2 signaling.

Its subcellular location is the cell membrane. The protein resides in the early endosome membrane. It localises to the recycling endosome membrane. It is found in the apical cell membrane. The protein localises to the late endosome membrane. Its subcellular location is the basolateral cell membrane. The enzyme catalyses Ag(+)(out) = Ag(+)(in). It catalyses the reaction Cu(+)(out) = Cu(+)(in). In terms of biological role, uniporter that mediates the transport of copper(1+) from the extracellular space to the cytoplasm, across the plasma membrane and delivers directly copper(1+) to specific chaperone such as ATOX1, via a copper(1+)- mediated transient interaction between the C-terminal domain and a copper(1+) chaperone, thus controlling intracellular copper(1+) levels. May function in copper(1+) import from the apical membrane thus may drive intestinal copper absorption. The copper(1+) transport mechanism is sodium-independent, saturable and of high-affinity. Also mediates the uptake of silver(1+). May function in the influx of the platinum-containing chemotherapeutic agents. The platinum-containing chemotherapeutic agents uptake is saturable. In vitro, mediates the transport of cadmium(2+) into cells. Also participates in the first step of copper(2+) acquisition by cells through a direct transfer of copper(2+) from copper(2+) carriers in blood, such as ALB to the N-terminal domain of SLC31A1, leading to copper(2+) reduction and probably followed by copper(1+) stabilization. In addition, functions as a redox sensor to promote angiogenesis in endothelial cells, in a copper(1+) transport independent manner, by transmitting the VEGF-induced ROS signal through a sulfenylation at Cys-189 leadin g to a subsequent disulfide bond formation between SLC31A1 and KDR. The SLC31A1-KDR complex is then co-internalized to early endosomes, driving a sustained VEGFR2 signaling. Mobilizes copper(1+) out of the endosomal compartment, making copper(1+) available for export out of the cells. The protein is High affinity copper uptake protein 1 of Sus scrofa (Pig).